We begin with the raw amino-acid sequence, 932 residues long: Adhesion G protein-coupled receptor E2 (932 aa).

An N-terminal signal peptide occupies residues 1 to 15 (MWGFWLLLFWGFSGT). The Extracellular segment spans residues 16–652 (HRWGMTTLAI…TMEFSLYIIS (637 aa)). 2 consecutive EGF-like domains span residues 32–69 (GVNECQDTTTCPAYATCTDTTESYYCTCKQGFLPSNGQ) and 81–119 (DVNECLRSDSPCGSNSVCTNIPGRARCSCLSGFSSSAGG). 11 disulfide bridges follow: Cys36-Cys48, Cys42-Cys57, Cys85-Cys98, Cys92-Cys107, Cys137-Cys149, Cys143-Cys158, Cys160-Cys171, Cys177-Cys189, Cys183-Cys198, Cys226-Cys239, and Cys233-Cys248. One can recognise an EGF-like 3; calcium-binding domain in the interval 133–172 (DVDECLTIGICPKNSNCSNSVGSYSCTCQSGFVSNGSTCE). N-linked (GlcNAc...) asparagine glycosylation is found at Asn148 and Asn167. An EGF-like 4; calcium-binding domain is found at 173 to 210 (DEDECVTRNACPEHATCHNTLGSYYCTCNEGLEFSGGG). One can recognise an EGF-like 5; calcium-binding domain in the interval 222-260 (DVDECSRNSTLCGPSFICINTLGSYSCSCPAGFSLSTFQ). An N-linked (GlcNAc...) asparagine glycan is attached at Asn229. 10 N-linked (GlcNAc...) asparagine glycosylation sites follow: Asn269, Asn283, Asn309, Asn333, Asn344, Asn363, Asn405, Asn417, Asn474, and Asn499. An EGF-like 6; calcium-binding domain is found at 272–307 (DIDECDDICPSNSSCTNTLGSYFCTCHPGFASSNGQ). 2 disulfides stabilise this stretch: Cys276–Cys286 and Cys280–Cys295. The region spanning 319–354 (DIDECTQDPFRCGRNSSCTNVPGSYNCSCLPDFRMD) is the EGF-like 7; calcium-binding domain. 2 disulfides stabilise this stretch: Cys323/Cys336 and Cys330/Cys345. Positions 482–643 (EYLEIESKVI…AIIMASGELT (162 aa)) constitute a GAIN-B domain. A Cell attachment site motif is present at residues 507-509 (RGD). Intrachain disulfides connect Cys596/Cys625 and Cys613/Cys627. Positions 596-643 (CVSWNTDVEDGRWTPSGCETVEASETHTVCSCNRMTNLAIIMASGELT) are GPS. A helical transmembrane segment spans residues 653 to 673 (YVGTVISLVCLALAIATFLLF). The Cytoplasmic segment spans residues 674–681 (RAVQNHNT). A helical membrane pass occupies residues 682–702 (YLHLHLCVCLFLAKILFLTGI). The Extracellular portion of the chain corresponds to 703-719 (DKTDNQTACAIIAGFLH). Asn707 carries N-linked (GlcNAc...) asparagine glycosylation. The helical transmembrane segment at 720–740 (YLFLACFFWMLVEAVMLFLMV) threads the bilayer. Over 741-756 (RNLKVVNYFSSRNIKM) the chain is Cytoplasmic. Residues 757 to 777 (LHLCAFGYGLPVVVVIISATV) form a helical membrane-spanning segment. Residues 778 to 795 (HPWGYGMHNRCWLNTETG) lie on the Extracellular side of the membrane. Residues 796 to 816 (FIWSFLGPVCMIITINSALLA) form a helical membrane-spanning segment. At 817-849 (WTLWVLRQKLCSVNSEVSKLKDTRLLTFKAIAQ) the chain is on the cytoplasmic side. The chain crosses the membrane as a helical span at residues 850-870 (IFILGCSWVLGIFQIGPLASI). Over 871–872 (MA) the chain is Extracellular. The chain crosses the membrane as a helical span at residues 873–893 (YLFTTINSLQGAFIFLIHCLL). At 894–932 (NRQVRDEYRKLLTRKTDLSSHSQTSGILLSSMPSTSKTG) the chain is on the cytoplasmic side.

This sequence belongs to the G-protein coupled receptor 2 family. Adhesion G-protein coupled receptor (ADGR) subfamily.

The protein resides in the cell membrane. Functionally, orphan receptor involved in cell adhesion and probably in cell-cell interactions involved specifically cells of the immune system. May play a role in regulatory T-cells (Treg) development. The sequence is that of Adhesion G protein-coupled receptor E2 (Adgre1) from Rattus norvegicus (Rat).